The chain runs to 1010 residues: MSQLRLLPSRLGAQAARLLAAHDIPVFGWRSRSSRPPATLPSSKGGGGSSYMEEMYFAWLENPRSVHKSWDSFFRKASEEAFSGSAQPRPPSVVHESRSAVSSRTKTSKLVEDHLAVQSLIRAYQIRGHHVAQLDPLGILDADLDSFVPSDLITTIDKLAFYDLQEADLDKEFQLPTTTFIGGSENTLSLREIIRRLENTYCQHIGLEFMFINDVEQCQWIRQKFETPGVMQFSSEEKRTLLARLVRSMRFEDFLARKWSSEKRFGLEGCEVMIPALKTIIDKSSEMGIENVILGMPHRGRLNVLANVIRKDLEQIFCQFDPKLEAADEGSGDVKYHLGMYHERINRVTNRNITLSLVANPSHLEAVDPVVQGKTKAEQFYRGDAQGKKVMSILVHGDAAFAGQGVVYETFHLSDLPSYTTNGTVHVVVNNQIGFTTDPRMARSSPYPTDVARVVNAPIFHVNADDPEAVIYVCSVAAEWRNTFNKDVVVDLVCYRRRGHNEMDEPMFTQPLMYKQIHRQVPVLKKYADKLIAEGTVTLQEFEEEIAKYDRICEEAYGRSKDKKILHIKHWLDSPWPGFFNVDGEPKSMTCPATGIPEDMLTHIGSVASSVPLEDFKIHTGLSRILRGRADMIKNRTVDWALAEYMAFGSLLKEGIRVRLSGQDVERGTFSHRHHVLHDQEVDRRTCVPMNHLWPDQAPYTVCNSSLSEYGVLGFELGYAMASPNALVLWEAQFGDFHNTAQCIIDQFISTGQAKWVRHNGIVLLLPHGMEGMGPEHSSARPERFLQMSNDDSDAYPAFTKDFEVSQLYDCNWIVVNCSTPANYFHVLRRQILLPFRKPLIIFTPKSLLRHPEAKFSFDQMVSGTSFQRVIPEDGAAARAPEQVRRLIFCTGKVYYDLVKERSSQGLEEKVAITRLEQISPFPFDLIKQEAEKYPGAELAWCQEEHKNMGYYDYISPRFMTILRRARPIWYVGRDPAAAPATGNRNTHLVSLKKFLDTAFNLQAFEGKTF.

The transit peptide at methionine 1 to phenylalanine 73 directs the protein to the mitochondrion. Residues histidine 130, aspartate 143, and aspartate 145 each coordinate Ca(2+). The thiamine diphosphate site is built by arginine 299, aspartate 398, asparagine 431, isoleucine 433, and glutamine 663. Mg(2+) is bound by residues aspartate 398, asparagine 431, and isoleucine 433.

The protein belongs to the alpha-ketoglutarate dehydrogenase family. As to quaternary structure, the OGDHC complex comprises multiple copies of three catalytic enzyme components, the 2-oxoglutarate dehydrogenase (OGDH/E1), the dihydrolipoamide dehydrogenase (DLST/E2) and the dihydrolipoamide dehydrogenase (DLD/E3). OGDHL/E1-like isoenzyme may replace OGDH in the OGDHC complex in the brain. The presence of either ODGH/E1 or ODGHL/E1-like isoenzyme in the complex may depend on its tissular distribution. Thiamine diphosphate is required as a cofactor. Mg(2+) serves as cofactor.

It localises to the mitochondrion matrix. The catalysed reaction is N(6)-[(R)-lipoyl]-L-lysyl-[protein] + 2-oxoglutarate + H(+) = N(6)-[(R)-S(8)-succinyldihydrolipoyl]-L-lysyl-[protein] + CO2. 2-oxoglutarate dehydrogenase (E1-like) component of the 2-oxoglutarate dehydrogenase multienzyme complex (OGDHC) which mediates the decarboxylation of alpha-ketoglutarate in the tricarboxylic acid cycle. The OGDHC complex catalyzes the overall conversion of 2-oxoglutarate to succinyl-CoA and CO(2) while reducing NAD(+) to NADH. The OGDHC complex is mainly active in the mitochondrion. Involved in the inhibition of cell proliferation and in apoptosis. This is 2-oxoglutarate dehydrogenase-like, mitochondrial (OGDHL) from Pongo abelii (Sumatran orangutan).